A 259-amino-acid polypeptide reads, in one-letter code: Dihydroorotate dehydrogenase B (NAD(+)), electron transfer subunit (259 aa).

Residues 3-103 enclose the FAD-binding FR-type domain; sequence KKQGRLTIVK…LGPLGQGFPL (101 aa). FAD contacts are provided by residues 54-57, 71-73, and 78-79; these read RPIS, IYR, and GT. Residues Cys222, Cys227, Cys230, and Cys246 each coordinate [2Fe-2S] cluster.

This sequence belongs to the PyrK family. As to quaternary structure, heterotetramer of 2 PyrK and 2 PyrD type B subunits. [2Fe-2S] cluster is required as a cofactor. FAD serves as cofactor.

It participates in pyrimidine metabolism; UMP biosynthesis via de novo pathway; orotate from (S)-dihydroorotate (NAD(+) route): step 1/1. Its function is as follows. Responsible for channeling the electrons from the oxidation of dihydroorotate from the FMN redox center in the PyrD type B subunit to the ultimate electron acceptor NAD(+). This chain is Dihydroorotate dehydrogenase B (NAD(+)), electron transfer subunit, found in Shouchella clausii (strain KSM-K16) (Alkalihalobacillus clausii).